The following is a 280-amino-acid chain: Ribosomal RNA large subunit methyltransferase J (280 aa).

S-adenosyl-L-methionine contacts are provided by residues His-19, His-42, Ser-100, Glu-118, 143–144, and Asp-164; that span reads DG. Asp-164 serves as the catalytic Proton acceptor.

The protein belongs to the RlmJ family. Monomer.

It catalyses the reaction adenosine(2030) in 23S rRNA + S-adenosyl-L-methionine = N(6)-methyladenosine(2030) in 23S rRNA + S-adenosyl-L-homocysteine + H(+). Its function is as follows. Specifically methylates the adenine in position 2030 of 23S rRNA. Nascent 23S rRNA seems to be the natural substrate. Appears to be not necessary for ribosome assembly. Required for the utilization of extracellular DNA as the sole source of carbon and energy. In Escherichia coli (strain K12), this protein is Ribosomal RNA large subunit methyltransferase J.